Reading from the N-terminus, the 310-residue chain is N-acetyl-gamma-glutamyl-phosphate reductase (310 aa).

The active site involves Cys-117.

This sequence belongs to the NAGSA dehydrogenase family. Type 2 subfamily.

The protein resides in the cytoplasm. The catalysed reaction is N-acetyl-L-glutamate 5-semialdehyde + phosphate + NADP(+) = N-acetyl-L-glutamyl 5-phosphate + NADPH + H(+). The protein operates within amino-acid biosynthesis; L-arginine biosynthesis; N(2)-acetyl-L-ornithine from L-glutamate: step 3/4. Functionally, catalyzes the NADPH-dependent reduction of N-acetyl-5-glutamyl phosphate to yield N-acetyl-L-glutamate 5-semialdehyde. The protein is N-acetyl-gamma-glutamyl-phosphate reductase of Rhizobium etli (strain CIAT 652).